The chain runs to 499 residues: Cobyric acid synthase (499 aa).

A GATase cobBQ-type domain is found at 266 to 449; sequence RLEIAVVRLP…LHGLFDNHLW (184 aa). Cys-344 acts as the Nucleophile in catalysis. The active site involves His-441.

The protein belongs to the CobB/CobQ family. CobQ subfamily.

It participates in cofactor biosynthesis; adenosylcobalamin biosynthesis. Its function is as follows. Catalyzes amidations at positions B, D, E, and G on adenosylcobyrinic A,C-diamide. NH(2) groups are provided by glutamine, and one molecule of ATP is hydrogenolyzed for each amidation. The chain is Cobyric acid synthase from Synechococcus sp. (strain JA-2-3B'a(2-13)) (Cyanobacteria bacterium Yellowstone B-Prime).